The sequence spans 216 residues: Small ribosomal subunit protein uS3 (216 aa).

A KH type-2 domain is found at 39 to 111 (IYKFFDKLVR…DINLQVSLLK (73 aa)).

The protein belongs to the universal ribosomal protein uS3 family. In terms of assembly, part of the 30S ribosomal subunit. Forms a tight complex with proteins S10 and S14.

Its function is as follows. Binds the lower part of the 30S subunit head. Binds mRNA in the 70S ribosome, positioning it for translation. In Mycoplasmopsis agalactiae (strain NCTC 10123 / CIP 59.7 / PG2) (Mycoplasma agalactiae), this protein is Small ribosomal subunit protein uS3.